Consider the following 588-residue polypeptide: MGTNQTQISDEYVTGNSSGVGGGISDVYGEDSATLDQLVTPWVTSVASGYTLMRDPRYNKGLAFTDKERDAHYITGLLPPVVLSQDVQERKVMHNLRQYTVPLQRYMALMDLQERNERLFYKLLIDNVEELLPVVYTPTVGEACQKYGSIYRRPQGLYISLKEKGKILEVLKNWPQRGIQVIVVTDGERILGLGDLGCQGMGIPVGKLSLYTALGGIRPSACLPITIDVGTNNEKLLNNEFYIGLKQKRANGEEYAEFLQEFMCAVKQNYGEKVLVQFEDFANHHAFELLSKYCSSHLVFNDDIQGTASVVLAGLIAAQKVLGKSLADHTFLFLGAGEAGTGIAELIALKISKETGKPIDETRKKIWLVDSKGLIVSERKESLQHFKQPWAHDHKPVKELLAAVNAIKPTVLIGTSGVGKTFTKEVVEAMATLNEKPLILALSNPTSQAECTAEEAYTWTKGRAIFASGSPFDPVQYDGKKFTPGQANNCYIFPGLGLGLIMSGAIRVRDDMLLAASEALASQVTEENFANGLIYPPFANIRKISANIAASVGAKTYELGLASNLPRPKDLVKMAESCMYSPVYRNFR.

Gly-2 carries the N-acetylglycine modification. The Proton donor role is filled by Tyr-136. Arg-189 is an NADP(+) binding site. Lys-207 functions as the Proton acceptor in the catalytic mechanism. The a divalent metal cation site is built by Glu-279, Asp-280, and Asp-303. NADP(+)-binding positions include Asp-303, 332 to 348, and Asn-444; that span reads LFLG…ELIA.

This sequence belongs to the malic enzymes family. As to quaternary structure, homohexamers and homooctamers. It depends on Mg(2+) as a cofactor. Mn(2+) serves as cofactor. As to expression, mostly expressed in flowers, and, to a lower extent, in stems. In leaves and stems, restricted to the trichomes and trichome basal cells. Also present in the stipules flanking the base of the inflorescence bract leaves and in the meristematic zone of developing lateral roots. In flowers, present in pollen and the abscission zone of developing siliques.

The protein resides in the cytoplasm. It catalyses the reaction (S)-malate + NADP(+) = pyruvate + CO2 + NADPH. The catalysed reaction is oxaloacetate + H(+) = pyruvate + CO2. With respect to regulation, slightly activated by succinate and aspartate. Repressed by fumarate, malate, oxaloacetate and glucose. The chain is NADP-dependent malic enzyme 3 (NADP-ME3) from Arabidopsis thaliana (Mouse-ear cress).